The following is a 348-amino-acid chain: Ion-translocating oxidoreductase complex subunit D (348 aa).

The next 5 helical transmembrane spans lie at 19–39, 41–61, 66–86, 87–107, and 122–142; these read FMLW…AFFG, GVVI…IVVA, KSTT…ILAM, AIPP…ALLL, and PAMV…TSWL. Residue threonine 186 is modified to FMN phosphoryl threonine. 5 helical membrane-spanning segments follow: residues 212 to 232, 236 to 256, 265 to 285, 291 to 311, and 315 to 335; these read IFAR…LFLL, IIHW…SALT, LNVL…FIAT, SITP…AYLI, and GSYP…VPLI.

This sequence belongs to the NqrB/RnfD family. In terms of assembly, the complex is composed of six subunits: RnfA, RnfB, RnfC, RnfD, RnfE and RnfG. It depends on FMN as a cofactor.

The protein localises to the cell inner membrane. Part of a membrane-bound complex that couples electron transfer with translocation of ions across the membrane. This is Ion-translocating oxidoreductase complex subunit D from Haemophilus ducreyi (strain 35000HP / ATCC 700724).